The following is a 143-amino-acid chain: uncharacterized protein (143 aa).

This is an uncharacterized protein from Archaeoglobus fulgidus (strain ATCC 49558 / DSM 4304 / JCM 9628 / NBRC 100126 / VC-16).